A 939-amino-acid chain; its full sequence is Isoleucine--tRNA ligase (939 aa).

The short motif at 57–67 (PYANGEIHIGH) is the 'HIGH' region element. An L-isoleucyl-5'-AMP-binding site is contributed by E563. The 'KMSKS' region signature appears at 604 to 608 (KMSKS). K607 serves as a coordination point for ATP. Residues C902, C905, C922, and C925 each coordinate Zn(2+).

This sequence belongs to the class-I aminoacyl-tRNA synthetase family. IleS type 1 subfamily. In terms of assembly, monomer. The cofactor is Zn(2+).

The protein localises to the cytoplasm. The enzyme catalyses tRNA(Ile) + L-isoleucine + ATP = L-isoleucyl-tRNA(Ile) + AMP + diphosphate. Catalyzes the attachment of isoleucine to tRNA(Ile). As IleRS can inadvertently accommodate and process structurally similar amino acids such as valine, to avoid such errors it has two additional distinct tRNA(Ile)-dependent editing activities. One activity is designated as 'pretransfer' editing and involves the hydrolysis of activated Val-AMP. The other activity is designated 'posttransfer' editing and involves deacylation of mischarged Val-tRNA(Ile). The sequence is that of Isoleucine--tRNA ligase from Methylococcus capsulatus (strain ATCC 33009 / NCIMB 11132 / Bath).